The chain runs to 316 residues: 2,3-dihydroxyphenylpropionate/2,3-dihydroxicinnamic acid 1,2-dioxygenase (316 aa).

Catalysis depends on His-115, which acts as the Proton donor. His-179 acts as the Proton acceptor in catalysis.

Belongs to the LigB/MhpB extradiol dioxygenase family. In terms of assembly, homotetramer. Fe(2+) serves as cofactor.

It carries out the reaction 3-(2,3-dihydroxyphenyl)propanoate + O2 = (2Z,4E)-2-hydroxy-6-oxonona-2,4-dienedioate + H(+). The enzyme catalyses (2E)-3-(2,3-dihydroxyphenyl)prop-2-enoate + O2 = (2Z,4E,7E)-2-hydroxy-6-oxonona-2,4,7-trienedioate + H(+). It functions in the pathway aromatic compound metabolism; 3-phenylpropanoate degradation. Catalyzes the non-heme iron(II)-dependent oxidative cleavage of 2,3-dihydroxyphenylpropionic acid and 2,3-dihydroxicinnamic acid into 2-hydroxy-6-ketononadienedioate and 2-hydroxy-6-ketononatrienedioate, respectively. The sequence is that of 2,3-dihydroxyphenylpropionate/2,3-dihydroxicinnamic acid 1,2-dioxygenase from Paraburkholderia xenovorans (strain LB400).